Here is a 1716-residue protein sequence, read N- to C-terminus: Histone-lysine N-methyltransferase SETD1A (1716 aa).

The interval 60 to 89 is interaction with WDR82; that stretch reads LQDPRCHVRSKARDFSLPVPKFKLDEFYIG. An RRM domain is found at 84-172; that stretch reads DEFYIGQIPL…NIIHAQLDIK (89 aa). 7 disordered regions span residues 194–367, 380–499, 516–670, 849–869, 911–1206, 1230–1259, and 1275–1297; these read PTGG…SSYP, TSYP…AQHS, FSFL…PPPH, AKPF…EKMK, KRKE…SRKV, EEVA…GTEV, and GLAT…AERP. The span at 222-231 shows a compositional bias: low complexity; the sequence is SDTAAYPAGT. Polar residues predominate over residues 243–277; it reads CSQDTNFSSSRQDTPSSFGQFTPQSSQGTPYTSRG. Low complexity-rich tracts occupy residues 278–295 and 315–357; these read STPY…TSTS and STSS…SSAS. Positions 430 to 440 are enriched in pro residues; it reads SEAPPPEPPEP. Over residues 441–461 the composition is skewed to gly residues; the sequence is GGGGGGSGGGGGGGGGGGGGA. Ser-477 carries the phosphoserine modification. Positions 477–487 are enriched in low complexity; sequence SPARSGSPAPE. Positions 488–499 are enriched in polar residues; sequence TTNESVPFAQHS. Ser-521 and Ser-578 each carry phosphoserine. The segment covering 581–591 has biased composition (polar residues); the sequence is ANGQNQASPCS. 2 stretches are compositionally biased toward pro residues: residues 606–631 and 638–670; these read SPPP…PPPY and GYPP…PPPH. The span at 859–869 shows a compositional bias: basic and acidic residues; sequence QAKEEDKEKMK. Position 930 is a phosphoserine (Ser-930). 2 stretches are compositionally biased toward acidic residues: residues 991–1009 and 1018–1027; these read KDED…EEAV and ASDGEDEDSD. Positions 1028–1071 are enriched in low complexity; that stretch reads SSSQCSLYADSDGENGSTSDSESGSSSSSSSSSSSSSSSSSSES. Residue Ser-1110 is modified to Phosphoserine. A compositionally biased stretch (pro residues) spans 1130–1150; it reads EEPPPSVPQPPAEPPAGPPDA. Positions 1283-1292 are enriched in acidic residues; it reads DDSEATETSD. The HCFC1-binding motif (HBM) motif lies at 1307–1311; that stretch reads EHNYA. Disordered stretches follow at residues 1355-1427 and 1480-1508; these read EEPK…FEPR and TNLS…SEGY. A compositionally biased stretch (acidic residues) spans 1369–1383; it reads EGEEEEEDEEEESES. The span at 1399–1412 shows a compositional bias: basic residues; it reads RRRSLRSHTRRRRP. Pro residues predominate over residues 1413-1424; sequence PLPPPPPPPPSF. Residues 1424–1459 form an interaction with CFP1 region; it reads FEPRSEFEQMTILYDIWNSGLDLEDMSYLRLTYERL. The interval 1459–1546 is interaction with ASH2L, RBBP5 and WDR5; it reads LLQQTSGADW…GTNRVLSERR (88 aa). A WDR5 interaction motif (WIN) motif is present at residues 1501–1506; that stretch reads GSARSE. Positions 1546-1551 match the RxxxRR motif motif; that stretch reads RSEQRR. The SET domain maps to 1577–1694; it reads KKLRFGRSRI…VDEEITYDYK (118 aa). Position 1693 (Tyr-1693) interacts with S-adenosyl-L-methionine. One can recognise a Post-SET domain in the interval 1700–1716; that stretch reads NKIPCLCGTESCRGSLN.

The protein belongs to the class V-like SAM-binding methyltransferase superfamily. In terms of assembly, component of the SET1A/COMPASS complex composed of the catalytic subunit SETD1A, WDR5, WDR82, RBBP5, ASH2L/ASH2, CXXC1/CFP1, HCFC1 and DPY30 homotrimer. Forms a core complex with the evolutionary conserved subcomplex WRAD composed of WDR5, RBBP5, ASH2L/ASH2 and DPY30 subunits; WRAD differentially stimulates the methyltransferase activity. Interacts with BOD1L1 (via COMPASS-Shg1 domain) at replication forks. Interacts with HCFC1. Interacts with ASH2/ASH2L. Interacts with CXXC1/CFP1. Interacts with RBBP5. Interacts (via N-terminal region) with WDR82; the interaction is direct. Interacts (via the RRM domain) with hyperphosphorylated C-terminal domain (CTD) of RNA polymerase II large subunit (POLR2A) only in the presence of WDR82. Binds specifically to CTD heptad repeats phosphorylated on 'Ser-5' of each heptad. Interacts with ZNF335. Interacts with SUPT6H. Interacts with NAP1L1. Interacts (via WIN motif) with WDR5.

It is found in the nucleus. The protein localises to the nucleus speckle. The protein resides in the chromosome. It localises to the cytoplasm. It carries out the reaction L-lysyl(4)-[histone H3] + S-adenosyl-L-methionine = N(6)-methyl-L-lysyl(4)-[histone H3] + S-adenosyl-L-homocysteine + H(+). The catalysed reaction is N(6)-methyl-L-lysyl(4)-[histone H3] + S-adenosyl-L-methionine = N(6),N(6)-dimethyl-L-lysyl(4)-[histone H3] + S-adenosyl-L-homocysteine + H(+). The enzyme catalyses N(6),N(6)-dimethyl-L-lysyl(4)-[histone H3] + S-adenosyl-L-methionine = N(6),N(6),N(6)-trimethyl-L-lysyl(4)-[histone H3] + S-adenosyl-L-homocysteine + H(+). Functionally, histone methyltransferase that catalyzes methyl group transfer from S-adenosyl-L-methionine to the epsilon-amino group of 'Lys-4' of histone H3 (H3K4) via a non-processive mechanism. Part of chromatin remodeling machinery, forms H3K4me1, H3K4me2 and H3K4me3 methylation marks at active chromatin sites where transcription and DNA repair take place. Responsible for H3K4me3 enriched promoters and transcriptional programming of inner mass stem cells and neuron progenitors during embryogenesis. Required for H3K4me1 mark at stalled replication forks. Mediates FANCD2-dependent nucleosome remodeling and RAD51 nucleofilaments stabilization at reversed forks, protecting them from nucleolytic degradation. Does not methylate 'Lys-4' of histone H3 if the neighboring 'Lys-9' residue is already methylated. Has RNA binding activity towards transcripts involved in RNA processing and the DNA damage response. The polypeptide is Histone-lysine N-methyltransferase SETD1A (Setd1a) (Mus musculus (Mouse)).